A 398-amino-acid chain; its full sequence is Glutamyl-tRNA reductase (398 aa).

Substrate is bound by residues 45-48 (TCNR), S88, 93-95 (EDQ), and Q99. C46 serves as the catalytic Nucleophile. NADP(+) is bound at residue 168 to 173 (GAGKMG).

Belongs to the glutamyl-tRNA reductase family. Homodimer.

The enzyme catalyses (S)-4-amino-5-oxopentanoate + tRNA(Glu) + NADP(+) = L-glutamyl-tRNA(Glu) + NADPH + H(+). The protein operates within porphyrin-containing compound metabolism; protoporphyrin-IX biosynthesis; 5-aminolevulinate from L-glutamyl-tRNA(Glu): step 1/2. Catalyzes the NADPH-dependent reduction of glutamyl-tRNA(Glu) to glutamate 1-semialdehyde (GSA). This Methanothermobacter marburgensis (strain ATCC BAA-927 / DSM 2133 / JCM 14651 / NBRC 100331 / OCM 82 / Marburg) (Methanobacterium thermoautotrophicum) protein is Glutamyl-tRNA reductase (hemA).